We begin with the raw amino-acid sequence, 306 residues long: 33 kDa chaperonin (306 aa).

2 disulfides stabilise this stretch: cysteine 242-cysteine 244 and cysteine 275-cysteine 278.

The protein belongs to the HSP33 family. Under oxidizing conditions two disulfide bonds are formed involving the reactive cysteines. Under reducing conditions zinc is bound to the reactive cysteines and the protein is inactive.

It is found in the cytoplasm. Redox regulated molecular chaperone. Protects both thermally unfolding and oxidatively damaged proteins from irreversible aggregation. Plays an important role in the bacterial defense system toward oxidative stress. In Gloeobacter violaceus (strain ATCC 29082 / PCC 7421), this protein is 33 kDa chaperonin.